A 32-amino-acid polypeptide reads, in one-letter code: Unknown protein from spot 206 of 2D-PAGE of etiolated coleoptile (32 aa).

This chain is Unknown protein from spot 206 of 2D-PAGE of etiolated coleoptile, found in Zea mays (Maize).